The primary structure comprises 684 residues: Soluble guanylate cyclase gcy-32 (684 aa).

H105 lines the heme pocket. Positions 396 to 432 (DVEVNLQLEANNEQLETMTRELELERQKTDSILKDML) form a coiled coil. Residues 454–582 (TVMFCDLPAF…ETVTLASQME (129 aa)) form the Guanylate cyclase domain. Residues D459 and D503 each coordinate Mg(2+).

It belongs to the adenylyl cyclase class-4/guanylyl cyclase family. In terms of assembly, heterodimer; with other soluble guanylate cyclases. It depends on heme as a cofactor. Expressed in a small number of neurons, corresponding to URX, AQR and PQR neurons.

Its subcellular location is the cytoplasm. The catalysed reaction is GTP = 3',5'-cyclic GMP + diphosphate. Its activity is regulated as follows. May be regulated by molecular oxygen. Probably not activated by nitric oxide (NO). Its function is as follows. Synthesizes cyclic GMP (cGMP) from GTP. Influences aerotaxis responses, aggregation and bordering behaviors (gathering around the edge of a bacterial lawn) in combination with other soluble guanylate cyclases. This is Soluble guanylate cyclase gcy-32 (gcy-32) from Caenorhabditis elegans.